The chain runs to 506 residues: GTPase Der (506 aa).

2 EngA-type G domains span residues 3-166 (PVVA…GEQL) and 218-391 (IKIA…ACAT). Residues 9-16 (GRPNVGKS), 56-60 (DTGGI), 118-121 (NKTD), 224-231 (GRPNVGKS), 271-275 (DTAGV), and 336-339 (NKWD) each bind GTP. The KH-like domain occupies 392 to 476 (QKNSTSMLTR…PIRIQFQEGN (85 aa)).

It belongs to the TRAFAC class TrmE-Era-EngA-EngB-Septin-like GTPase superfamily. EngA (Der) GTPase family. In terms of assembly, associates with the 50S ribosomal subunit.

Its function is as follows. GTPase that plays an essential role in the late steps of ribosome biogenesis. In Actinobacillus pleuropneumoniae serotype 7 (strain AP76), this protein is GTPase Der.